The following is a 95-amino-acid chain: Large ribosomal subunit protein bL25 (95 aa).

This sequence belongs to the bacterial ribosomal protein bL25 family. Part of the 50S ribosomal subunit; part of the 5S rRNA/L5/L18/L25 subcomplex. Contacts the 5S rRNA. Binds to the 5S rRNA independently of L5 and L18.

In terms of biological role, this is one of the proteins that binds to the 5S RNA in the ribosome where it forms part of the central protuberance. The chain is Large ribosomal subunit protein bL25 from Shewanella halifaxensis (strain HAW-EB4).